We begin with the raw amino-acid sequence, 142 residues long: MKYLGIDYGTKRTGVAASDTGGSMAFPRRTIVMTTRDRFFAELLAVAEEERAEAYVVGLPLLHDGTDTLTTRQVRNFVERLKRRTTLPVYLMEEFLSSYEAEDDLRDAGLSGRALEAVVDQQAAVRILQSFLNLPESRRTPA.

This sequence belongs to the YqgF nuclease family.

It is found in the cytoplasm. In terms of biological role, could be a nuclease involved in processing of the 5'-end of pre-16S rRNA. The protein is Putative pre-16S rRNA nuclease of Nitratidesulfovibrio vulgaris (strain DSM 19637 / Miyazaki F) (Desulfovibrio vulgaris).